A 265-amino-acid polypeptide reads, in one-letter code: Putative hydro-lyase Teth514_1597 (265 aa).

It belongs to the D-glutamate cyclase family.

This Thermoanaerobacter sp. (strain X514) protein is Putative hydro-lyase Teth514_1597.